We begin with the raw amino-acid sequence, 362 residues long: Peptide chain release factor 1 (362 aa).

Position 235 is an N5-methylglutamine (glutamine 235).

Belongs to the prokaryotic/mitochondrial release factor family. In terms of processing, methylated by PrmC. Methylation increases the termination efficiency of RF1.

It localises to the cytoplasm. Functionally, peptide chain release factor 1 directs the termination of translation in response to the peptide chain termination codons UAG and UAA. The chain is Peptide chain release factor 1 from Acinetobacter baylyi (strain ATCC 33305 / BD413 / ADP1).